A 334-amino-acid chain; its full sequence is Putative carboxypeptidase VC_A0337 (334 aa).

The active-site Nucleophile is Ser112. Catalysis depends on charge relay system residues Glu234 and His302.

Belongs to the peptidase S66 family.

The chain is Putative carboxypeptidase VC_A0337 from Vibrio cholerae serotype O1 (strain ATCC 39315 / El Tor Inaba N16961).